A 207-amino-acid chain; its full sequence is Vexin (207 aa).

The segment at 55-102 (LELLPHRGDRRDPGDGRRFGRLQTARPPTAHPAKASARPVGISEPKTS) is disordered. A compositionally biased stretch (basic and acidic residues) spans 58–72 (LPHRGDRRDPGDGRR).

Belongs to the vexin family.

The protein localises to the cell membrane. The protein resides in the nucleus. Required for neurogenesis in the neural plate and retina. Strongly cooperates with neural bHLH factors to promote neurogenesis. This is Vexin from Pongo abelii (Sumatran orangutan).